Reading from the N-terminus, the 650-residue chain is Cytosolic Fe-S cluster assembly factor NAR1 (650 aa).

Residues Cys-22, Cys-81, Cys-84, Cys-87, Cys-215, Cys-270, Cys-480, and Cys-484 each coordinate [4Fe-4S] cluster.

The protein belongs to the NARF family.

Component of the cytosolic Fe/S protein assembly machinery. Required for maturation of extramitochondrial Fe/S proteins. May play a role in the transfer of pre-assembled Fe/S clusters to target apoproteins. This chain is Cytosolic Fe-S cluster assembly factor NAR1 (NAR1), found in Cryptococcus neoformans var. neoformans serotype D (strain JEC21 / ATCC MYA-565) (Filobasidiella neoformans).